A 265-amino-acid polypeptide reads, in one-letter code: Energy-coupling factor transporter ATP-binding protein EcfA1 (265 aa).

An ABC transporter domain is found at 2–236 (IKIKNLVFRY…KEIVELAKID (235 aa)). 36–43 (GHNGSGKS) is a binding site for ATP.

It belongs to the ABC transporter superfamily. Energy-coupling factor EcfA family. In terms of assembly, forms a stable energy-coupling factor (ECF) transporter complex composed of 2 membrane-embedded substrate-binding proteins (S component), 2 ATP-binding proteins (A component) and 2 transmembrane proteins (T component).

Its subcellular location is the cell membrane. ATP-binding (A) component of a common energy-coupling factor (ECF) ABC-transporter complex. Unlike classic ABC transporters this ECF transporter provides the energy necessary to transport a number of different substrates. The protein is Energy-coupling factor transporter ATP-binding protein EcfA1 of Mycoplasmopsis pulmonis (strain UAB CTIP) (Mycoplasma pulmonis).